The primary structure comprises 156 residues: Class I hydrophobin B (156 aa).

Residues 1-18 (MQFTLSAVVLALAGFSAA) form the signal peptide. Intrachain disulfides connect Cys52–Cys130, Cys60–Cys124, Cys61–Cys101, and Cys131–Cys149.

This sequence belongs to the fungal hydrophobin family.

Its subcellular location is the secreted. It is found in the cell wall. In terms of biological role, aerial growth, conidiation, and dispersal of filamentous fungi in the environment rely upon a capability of their secreting small amphipathic proteins called hydrophobins (HPBs) with low sequence identity. Class I can self-assemble into an outermost layer of rodlet bundles on aerial cell surfaces, conferring cellular hydrophobicity that supports fungal growth, development and dispersal; whereas Class II form highly ordered films at water-air interfaces through intermolecular interactions but contribute nothing to the rodlet structure. In P.expansum, hydrophobins contribute to germination, tolerance to cold stress and mycotoxins patulin and citrinin production. HfbA and HfbB are essential for fungal surface hydrophobicity. The polypeptide is Class I hydrophobin B (Penicillium expansum (Blue mold rot fungus)).